We begin with the raw amino-acid sequence, 424 residues long: Probable serine/threonine-protein kinase PBL15 (424 aa).

Residues 99-380 (FSGNYLLGEG…AVVEALESLI (282 aa)) form the Protein kinase domain. ATP is bound by residues 105–113 (LGEGGFGKV) and Lys-134. Position 179 is a phosphotyrosine (Tyr-179). The active-site Proton acceptor is Asp-229. A Phosphoserine modification is found at Ser-233. 2 positions are modified to phosphothreonine: Thr-264 and Thr-269. Tyr-277 bears the Phosphotyrosine mark. The segment at 390–424 (GHWPLSPKSQGGKVSPKVRGDHRSGRKSAPGSLRS) is disordered.

This sequence belongs to the protein kinase superfamily. Ser/Thr protein kinase family. In terms of assembly, interacts with the Xanthomonas campestris effector XopAC/AvrAC.

The protein localises to the cell membrane. The catalysed reaction is L-seryl-[protein] + ATP = O-phospho-L-seryl-[protein] + ADP + H(+). It carries out the reaction L-threonyl-[protein] + ATP = O-phospho-L-threonyl-[protein] + ADP + H(+). In terms of biological role, may be involved in plant defense signaling. The protein is Probable serine/threonine-protein kinase PBL15 of Arabidopsis thaliana (Mouse-ear cress).